Reading from the N-terminus, the 355-residue chain is Aurora kinase (355 aa).

In terms of domain architecture, Protein kinase spans 89-340; that stretch reads FEIGKPLGKG…LEQVMRHPWI (252 aa). Residues 95-103 and K118 each bind ATP; that span reads LGKGKFGRV. D212 (proton acceptor) is an active-site residue.

Belongs to the protein kinase superfamily. Ser/Thr protein kinase family. Aurora subfamily. Component of the CPC complex at least composed of ark1, bir1 and pic1. Interacts with the mitotic checkpoint complex (MCC) subunit mad3.

It is found in the nucleus. It localises to the cytoplasm. Its subcellular location is the cytoskeleton. The protein localises to the spindle. It catalyses the reaction L-seryl-[protein] + ATP = O-phospho-L-seryl-[protein] + ADP + H(+). The enzyme catalyses L-threonyl-[protein] + ATP = O-phospho-L-threonyl-[protein] + ADP + H(+). Component of the chromosomal passenger complex (CPC), a complex that acts as a key regulator of chromosome segregation and cytokinesis. Has a role in error-correction of aberrent kinetochore-microtubule attachments to ensure that sister kinetochores become bioriented and connect to opposite poles by promoting spindle assembly checkpoint signaling. Ark1 is also required for phosphorylation of histone H3 that accompanies chromosome condensation and condensin recruitment to mitotic chromatin. In Schizosaccharomyces pombe (strain 972 / ATCC 24843) (Fission yeast), this protein is Aurora kinase (ark1).